Reading from the N-terminus, the 227-residue chain is ATP-dependent dethiobiotin synthetase BioD (227 aa).

13–18 (DIGKTY) serves as a coordination point for ATP. Thr-17 contacts Mg(2+). Lys-38 is an active-site residue. Substrate is bound at residue Ser-42. ATP contacts are provided by residues Asp-55, 116-119 (EGSG), and 179-180 (NN). Positions 55 and 116 each coordinate Mg(2+).

It belongs to the dethiobiotin synthetase family. Homodimer. Mg(2+) is required as a cofactor.

The protein resides in the cytoplasm. It carries out the reaction (7R,8S)-7,8-diammoniononanoate + CO2 + ATP = (4R,5S)-dethiobiotin + ADP + phosphate + 3 H(+). Its pathway is cofactor biosynthesis; biotin biosynthesis; biotin from 7,8-diaminononanoate: step 1/2. Its function is as follows. Catalyzes a mechanistically unusual reaction, the ATP-dependent insertion of CO2 between the N7 and N8 nitrogen atoms of 7,8-diaminopelargonic acid (DAPA, also called 7,8-diammoniononanoate) to form a ureido ring. The polypeptide is ATP-dependent dethiobiotin synthetase BioD (Clostridium botulinum (strain Kyoto / Type A2)).